The sequence spans 343 residues: N-acetyl-gamma-glutamyl-phosphate reductase (343 aa).

Cysteine 147 is a catalytic residue.

It belongs to the NAGSA dehydrogenase family. Type 1 subfamily.

The protein localises to the cytoplasm. The catalysed reaction is N-acetyl-L-glutamate 5-semialdehyde + phosphate + NADP(+) = N-acetyl-L-glutamyl 5-phosphate + NADPH + H(+). It participates in amino-acid biosynthesis; L-arginine biosynthesis; N(2)-acetyl-L-ornithine from L-glutamate: step 3/4. In terms of biological role, catalyzes the NADPH-dependent reduction of N-acetyl-5-glutamyl phosphate to yield N-acetyl-L-glutamate 5-semialdehyde. The polypeptide is N-acetyl-gamma-glutamyl-phosphate reductase (Listeria monocytogenes serotype 4b (strain CLIP80459)).